The chain runs to 145 residues: Small ribosomal subunit protein eS19 (145 aa).

The segment at 120-145 is disordered; that stretch reads GGRRISENGQRDLDRIAAQTLEEDDE. A compositionally biased stretch (basic and acidic residues) spans 123 to 134; sequence RISENGQRDLDR.

The protein belongs to the eukaryotic ribosomal protein eS19 family. In terms of assembly, component of the small ribosomal subunit. Mature ribosomes consist of a small (40S) and a large (60S) subunit. The 40S subunit contains about 32 different proteins and 1 molecule of RNA (18S). The 60S subunit contains 45 different proteins and 3 molecules of RNA (25S, 5.8S and 5S).

Its subcellular location is the cytoplasm. In terms of biological role, component of the ribosome, a large ribonucleoprotein complex responsible for the synthesis of proteins in the cell. The small ribosomal subunit (SSU) binds messenger RNAs (mRNAs) and translates the encoded message by selecting cognate aminoacyl-transfer RNA (tRNA) molecules. The large subunit (LSU) contains the ribosomal catalytic site termed the peptidyl transferase center (PTC), which catalyzes the formation of peptide bonds, thereby polymerizing the amino acids delivered by tRNAs into a polypeptide chain. The nascent polypeptides leave the ribosome through a tunnel in the LSU and interact with protein factors that function in enzymatic processing, targeting, and the membrane insertion of nascent chains at the exit of the ribosomal tunnel. RPS19A is required for proper maturation of the small (40S) ribosomal subunit. In Candida albicans (strain SC5314 / ATCC MYA-2876) (Yeast), this protein is Small ribosomal subunit protein eS19 (RPS19A).